The following is a 444-amino-acid chain: Glutamate dehydrogenase (444 aa).

Lys-124 is an active-site residue.

Belongs to the Glu/Leu/Phe/Val dehydrogenases family. Homohexamer.

The catalysed reaction is L-glutamate + NAD(+) + H2O = 2-oxoglutarate + NH4(+) + NADH + H(+). It catalyses the reaction L-glutamate + NADP(+) + H2O = 2-oxoglutarate + NH4(+) + NADPH + H(+). The polypeptide is Glutamate dehydrogenase (gdhA) (Bacteroides thetaiotaomicron (strain ATCC 29148 / DSM 2079 / JCM 5827 / CCUG 10774 / NCTC 10582 / VPI-5482 / E50)).